A 148-amino-acid polypeptide reads, in one-letter code: Macrodomain Ter protein (148 aa).

Belongs to the MatP family. In terms of assembly, homodimer.

It is found in the cytoplasm. Functionally, required for spatial organization of the terminus region of the chromosome (Ter macrodomain) during the cell cycle. Prevents early segregation of duplicated Ter macrodomains during cell division. Binds specifically to matS, which is a 13 bp signature motif repeated within the Ter macrodomain. This Haemophilus ducreyi (strain 35000HP / ATCC 700724) protein is Macrodomain Ter protein.